Reading from the N-terminus, the 454-residue chain is Phosphoglucosamine mutase (454 aa).

Ser-101 functions as the Phosphoserine intermediate in the catalytic mechanism. Ser-101, Asp-243, Asp-245, and Asp-247 together coordinate Mg(2+). The residue at position 101 (Ser-101) is a Phosphoserine.

Belongs to the phosphohexose mutase family. Mg(2+) serves as cofactor. In terms of processing, activated by phosphorylation.

It catalyses the reaction alpha-D-glucosamine 1-phosphate = D-glucosamine 6-phosphate. Its function is as follows. Catalyzes the conversion of glucosamine-6-phosphate to glucosamine-1-phosphate. In Geotalea daltonii (strain DSM 22248 / JCM 15807 / FRC-32) (Geobacter daltonii), this protein is Phosphoglucosamine mutase.